The chain runs to 105 residues: BLOC-1-related complex subunit 7 (105 aa).

The protein belongs to the BORCS7 family. In terms of assembly, component of the BLOC-one-related complex (BORC) which is composed of BLOC1S1, BLOC1S2, BORCS5, BORCS6, BORCS7, BORCS8, KXD1 and SNAPIN.

The protein resides in the lysosome membrane. In terms of biological role, as part of the BORC complex may play a role in lysosomes movement and localization at the cell periphery. Associated with the cytosolic face of lysosomes, the BORC complex may recruit ARL8B and couple lysosomes to microtubule plus-end-directed kinesin motor. The sequence is that of BLOC-1-related complex subunit 7 from Bos taurus (Bovine).